A 438-amino-acid chain; its full sequence is Citrate synthase (438 aa).

Active-site residues include His-306 and Asp-364.

The protein belongs to the citrate synthase family.

The catalysed reaction is oxaloacetate + acetyl-CoA + H2O = citrate + CoA + H(+). The protein operates within carbohydrate metabolism; tricarboxylic acid cycle; isocitrate from oxaloacetate: step 1/2. This chain is Citrate synthase (gltA), found in Bartonella quintana (strain Toulouse) (Rochalimaea quintana).